The chain runs to 177 residues: Ribosome maturation factor RimP (177 aa).

The segment covering 153–171 has biased composition (basic and acidic residues); sequence VEFNRKDTKNDNQTEHDNK. The interval 153 to 177 is disordered; that stretch reads VEFNRKDTKNDNQTEHDNKTEEEEA.

It belongs to the RimP family.

The protein resides in the cytoplasm. Functionally, required for maturation of 30S ribosomal subunits. The chain is Ribosome maturation factor RimP from Streptomyces coelicolor (strain ATCC BAA-471 / A3(2) / M145).